The sequence spans 169 residues: Transcription antitermination protein NusB (169 aa).

Positions 147 to 169 (RGLIDQSFSRPQKPESEATEIEE) are disordered.

The protein belongs to the NusB family.

In terms of biological role, involved in transcription antitermination. Required for transcription of ribosomal RNA (rRNA) genes. Binds specifically to the boxA antiterminator sequence of the ribosomal RNA (rrn) operons. This chain is Transcription antitermination protein NusB, found in Chlorobium chlorochromatii (strain CaD3).